A 205-amino-acid polypeptide reads, in one-letter code: MPLIPMVIEQTSRGERAFDIYSRLLKDRIVFIGSAIDDETANLLIAQLLFLESEDPDKDINFYINSPGGKVSAGMAIYDTMQYIKSDIATVCIGHAASMGAFLLAAGAKGKRFSLPNSRIMIHQPMGGAQGQASDIAIQAKEILRMKDILNQILAHHTGKPLEQIQVDTDRDFFMSGEEAKAYGIVDHVITDRSDLDKLEKPQEA.

Serine 98 functions as the Nucleophile in the catalytic mechanism. Histidine 123 is an active-site residue.

It belongs to the peptidase S14 family. Fourteen ClpP subunits assemble into 2 heptameric rings which stack back to back to give a disk-like structure with a central cavity, resembling the structure of eukaryotic proteasomes.

The protein localises to the cytoplasm. It carries out the reaction Hydrolysis of proteins to small peptides in the presence of ATP and magnesium. alpha-casein is the usual test substrate. In the absence of ATP, only oligopeptides shorter than five residues are hydrolyzed (such as succinyl-Leu-Tyr-|-NHMec, and Leu-Tyr-Leu-|-Tyr-Trp, in which cleavage of the -Tyr-|-Leu- and -Tyr-|-Trp bonds also occurs).. Functionally, cleaves peptides in various proteins in a process that requires ATP hydrolysis. Has a chymotrypsin-like activity. Plays a major role in the degradation of misfolded proteins. The chain is ATP-dependent Clp protease proteolytic subunit from Desulfosudis oleivorans (strain DSM 6200 / JCM 39069 / Hxd3) (Desulfococcus oleovorans).